The primary structure comprises 169 residues: Glycine-rich RNA-binding protein GRP2A (169 aa).

Positions tyrosine 8–serine 86 constitute an RRM domain. Disordered stretches follow at residues methionine 69–glycine 100 and tyrosine 125–tryptophan 169. Positions serine 89 to glycine 100 are enriched in gly residues.

As to expression, predominantly expressed in meristematic and growing tissue.

It localises to the nucleus. Its function is as follows. May play a general role in circadian phenomena associated with meristematic tissue. In Sinapis alba (White mustard), this protein is Glycine-rich RNA-binding protein GRP2A.